Reading from the N-terminus, the 350-residue chain is MGAGASAEEKHSRELEKKLKEDAEKDARTVKLLLLGAGESGKSTIVKQMKIIHQDGYSLEECLEFIAIIYGNTLQSILAIVRAMTTLNIQYGDSARQDDARKLMHMADTIEEGTMPKEMSDIIQRLWKDSGIQACFERASEYQLNDSAGYYLSDLERLVTPGYVPTEQDVLRSRVKTTGIIETQFSFKDLNFRMFDVGGQRSERKKWIHCFEGVTCIIFIAALSAYDMVLVEDDEVNRMHESLHLFNSICNHRYFATTSIVLFLNKKDVFFEKIKKAHLSICFPDYDGPNTYEDAGNYIKVQFLELNMRRDVKEIYSHMTCATDTQNVKFVFDAVTDIIIKENLKDCGLF.

The interval M1–E21 is disordered. G2 is lipidated: N-myristoyl glycine. Residues A7–E21 are compositionally biased toward basic and acidic residues. The 323-residue stretch at R28–F350 folds into the G-alpha domain. Residues K31 to T44 form a G1 motif region. G36 to S43 is a GTP binding site. S43 is a Mg(2+) binding site. Residue Y142 is modified to Phosphotyrosine; by SRC. GTP is bound by residues D146, L171–T177, G199, N265–D268, and A322. A G2 motif region spans residues D169 to T177. ADP-ribosylarginine; by cholera toxin is present on R174. A Mg(2+)-binding site is contributed by T177. A G3 motif region spans residues F192–R201. The segment at V261–D268 is G4 motif. The G5 motif stretch occupies residues T320–T325. The interaction with RHO stretch occupies residues I340 to F350. C347 carries the ADP-ribosylcysteine; by pertussis toxin modification.

Belongs to the G-alpha family. G(i/o/t/z) subfamily. As to quaternary structure, heterotrimeric G proteins are composed of 3 subunits alpha, beta and gamma. The alpha chain contains the guanine nucleotide binding site. Interacts with RHO. Interacts with RGS9 and PDE6G. Interacts (when myristoylated) with UNC119; interaction is required for localization in sensory neurons. In terms of tissue distribution, rod photoreceptor cells. Predominantly expressed in the retina followed by the ciliary body, iris and retinal pigment epithelium.

It is found in the cell projection. The protein localises to the cilium. It localises to the photoreceptor outer segment. Its subcellular location is the membrane. The protein resides in the photoreceptor inner segment. Functionally, functions as a signal transducer for the rod photoreceptor RHO. Required for normal RHO-mediated light perception by the retina. Guanine nucleotide-binding proteins (G proteins) function as transducers downstream of G protein-coupled receptors (GPCRs), such as the photoreceptor RHO. The alpha chain contains the guanine nucleotide binding site and alternates between an active, GTP-bound state and an inactive, GDP-bound state. Activated RHO promotes GDP release and GTP binding. Signaling is mediated via downstream effector proteins, such as cGMP-phosphodiesterase. The protein is Guanine nucleotide-binding protein G(t) subunit alpha-1 (GNAT1) of Homo sapiens (Human).